The following is a 334-amino-acid chain: Holliday junction branch migration complex subunit RuvB (334 aa).

A large ATPase domain (RuvB-L) region spans residues 1–182 (MDDRMIDGEL…FGVLSRLEYY (182 aa)). ATP contacts are provided by residues leucine 21, arginine 22, glycine 63, lysine 66, threonine 67, threonine 68, 129 to 131 (EDF), arginine 172, tyrosine 182, and arginine 219. Threonine 67 contacts Mg(2+). The interval 183 to 253 (EIKDLCNIVE…STKQALEMLQ (71 aa)) is small ATPAse domain (RuvB-S). Positions 256–334 (DAGLDHVDHK…HLGIKRTGED (79 aa)) are head domain (RuvB-H). Residues arginine 311 and arginine 316 each coordinate DNA.

The protein belongs to the RuvB family. In terms of assembly, homohexamer. Forms an RuvA(8)-RuvB(12)-Holliday junction (HJ) complex. HJ DNA is sandwiched between 2 RuvA tetramers; dsDNA enters through RuvA and exits via RuvB. An RuvB hexamer assembles on each DNA strand where it exits the tetramer. Each RuvB hexamer is contacted by two RuvA subunits (via domain III) on 2 adjacent RuvB subunits; this complex drives branch migration. In the full resolvosome a probable DNA-RuvA(4)-RuvB(12)-RuvC(2) complex forms which resolves the HJ.

The protein localises to the cytoplasm. The enzyme catalyses ATP + H2O = ADP + phosphate + H(+). In terms of biological role, the RuvA-RuvB-RuvC complex processes Holliday junction (HJ) DNA during genetic recombination and DNA repair, while the RuvA-RuvB complex plays an important role in the rescue of blocked DNA replication forks via replication fork reversal (RFR). RuvA specifically binds to HJ cruciform DNA, conferring on it an open structure. The RuvB hexamer acts as an ATP-dependent pump, pulling dsDNA into and through the RuvAB complex. RuvB forms 2 homohexamers on either side of HJ DNA bound by 1 or 2 RuvA tetramers; 4 subunits per hexamer contact DNA at a time. Coordinated motions by a converter formed by DNA-disengaged RuvB subunits stimulates ATP hydrolysis and nucleotide exchange. Immobilization of the converter enables RuvB to convert the ATP-contained energy into a lever motion, pulling 2 nucleotides of DNA out of the RuvA tetramer per ATP hydrolyzed, thus driving DNA branch migration. The RuvB motors rotate together with the DNA substrate, which together with the progressing nucleotide cycle form the mechanistic basis for DNA recombination by continuous HJ branch migration. Branch migration allows RuvC to scan DNA until it finds its consensus sequence, where it cleaves and resolves cruciform DNA. In Oceanobacillus iheyensis (strain DSM 14371 / CIP 107618 / JCM 11309 / KCTC 3954 / HTE831), this protein is Holliday junction branch migration complex subunit RuvB.